A 139-amino-acid polypeptide reads, in one-letter code: Large ribosomal subunit protein uL13 (139 aa).

The protein belongs to the universal ribosomal protein uL13 family. Part of the 50S ribosomal subunit.

This protein is one of the early assembly proteins of the 50S ribosomal subunit, although it is not seen to bind rRNA by itself. It is important during the early stages of 50S assembly. The chain is Large ribosomal subunit protein uL13 from Wolinella succinogenes (strain ATCC 29543 / DSM 1740 / CCUG 13145 / JCM 31913 / LMG 7466 / NCTC 11488 / FDC 602W) (Vibrio succinogenes).